The sequence spans 327 residues: Complex I intermediate-associated protein 30, mitochondrial (327 aa).

The N-terminal 24 residues, 1-24, are a transit peptide targeting the mitochondrion; that stretch reads MALVHKLLRGTYILRKFSKPASAL. Residues 42 to 63 form a disordered region; that stretch reads PVASPGKASSQRKTEGDLQGDH. Residues 53–63 are compositionally biased toward basic and acidic residues; the sequence is RKTEGDLQGDH. Ser318 is modified (phosphoserine).

It belongs to the CIA30 family. Part of the mitochondrial complex I assembly/MCIA complex that comprises at least the core subunits TMEM126B, NDUFAF1, ECSIT and ACAD9 and complement subunits such as COA1 and TMEM186. Interacts with ECSIT. Interacts with ACAD9. At early stages of complex I assembly, it is found in intermediate subcomplexes that contain different subunits including NDUFB6, NDUFA6, NDUFA9, NDUFS3, NDUFS7, ND1, ND2 and ND3. Interacts with TMEM70 and TMEM242.

It localises to the mitochondrion. The protein resides in the mitochondrion matrix. As part of the MCIA complex, involved in the assembly of the mitochondrial complex I. This chain is Complex I intermediate-associated protein 30, mitochondrial, found in Pongo pygmaeus (Bornean orangutan).